The chain runs to 178 residues: MAGALRKTMIYLGLADGDEHYESEHHTPHKDEDDSMEHDREERRAPAPVREIARETPTPHAAEEEYRAPVTPIKRAASSREETTGLRQITTIHPRSYNDAKLIGESFRDGIPVIMNVTDMGEADAKRLVDFSAGLVFGLRGSIERVTNKVFLLSPSYVEVIGDDKKVSETQASFFNQS.

A compositionally biased stretch (basic and acidic residues) spans 19–45; sequence EHYESEHHTPHKDEDDSMEHDREERRA. Residues 19-65 form a disordered region; the sequence is EHYESEHHTPHKDEDDSMEHDREERRAPAPVREIARETPTPHAAEEE.

It belongs to the SepF family. Homodimer. Interacts with FtsZ.

The protein localises to the cytoplasm. Functionally, cell division protein that is part of the divisome complex and is recruited early to the Z-ring. Probably stimulates Z-ring formation, perhaps through the cross-linking of FtsZ protofilaments. Its function overlaps with FtsA. The polypeptide is Cell division protein SepF (Arthrobacter sp. (strain FB24)).